We begin with the raw amino-acid sequence, 204 residues long: Rho GDP-dissociation inhibitor 1 (204 aa).

Residues 1–36 (MAEQEPTAEQLAQIAAENEEDEHSVNYKPPAQKSIQ) form a disordered region. Position 2 is an N-acetylalanine (alanine 2). Phosphoserine is present on serine 34. Lysine 43 carries the N6-acetyllysine modification. Serine 47 is subject to Phosphoserine. Lysine 105 and lysine 127 each carry N6-acetyllysine. Glycyl lysine isopeptide (Lys-Gly) (interchain with G-Cter in SUMO1); alternate cross-links involve residues lysine 138 and lysine 141. Glycyl lysine isopeptide (Lys-Gly) (interchain with G-Cter in SUMO2); alternate cross-links involve residues lysine 138 and lysine 141. Position 141 is an N6-acetyllysine; alternate (lysine 141). An N6-succinyllysine; alternate modification is found at lysine 141. Lysine 178 carries the N6-acetyllysine modification.

The protein belongs to the Rho GDI family. Monomer. Interacts with FER. Interacts with PLXNB3. Forms a heterodimer with RAC1. Interacts with RHOA, the affinity is increased by three orders of magnitude when RHOA is prenylated. Interacts with PSMD10; the interaction increases ARHGDIA association with RHOA, leading to ARHGDIA-mediated inactivation of RHOA and ROCK and prolonged AKT activation. Interacts with KANK2; the interaction is direct and may regulate the interaction of ARHGDIA with RHOA, RAC1 and CDC42. Interacts with RHOC. Interacts with CDC42. Interacts with NGFR (via death domain); NGFR binding decreases the affinity for RHOA.

Its subcellular location is the cytoplasm. Functionally, controls Rho proteins homeostasis. Regulates the GDP/GTP exchange reaction of the Rho proteins by inhibiting the dissociation of GDP from them, and the subsequent binding of GTP to them. Retains Rho proteins such as CDC42, RAC1 and RHOA in an inactive cytosolic pool, regulating their stability and protecting them from degradation. Actively involved in the recycling and distribution of activated Rho GTPases in the cell, mediates extraction from membranes of both inactive and activated molecules due its exceptionally high affinity for prenylated forms. Through the modulation of Rho proteins, may play a role in cell motility regulation. In glioma cells, inhibits cell migration and invasion by mediating the signals of SEMA5A and PLXNB3 that lead to inactivation of RAC1. The polypeptide is Rho GDP-dissociation inhibitor 1 (ARHGDIA) (Homo sapiens (Human)).